Here is an 852-residue protein sequence, read N- to C-terminus: Probable nitrite reductase-hydroxylamine oxidoreductase fusion protein (852 aa).

Residues 1-27 (MLNKSAALVPVVLAFLFLFLCFQCLYA) form the signal peptide. Positions 28–327 (DIRCLTGKDG…DEGRKTLSAP (300 aa)) are nitrite reductase domain. 2 Plastocyanin-like domains span residues 72-169 (VPGP…IVEP) and 217-307 (GETW…VEEG). Cu cation-binding residues include histidine 102 and histidine 145. The segment at 328–827 (GQDRQPPTLE…ISWWWGTAQG (500 aa)) is hydroxylamine oxidoreductase domain. Heme contacts are provided by cysteine 406, cysteine 409, histidine 410, histidine 426, cysteine 463, cysteine 466, histidine 467, histidine 471, cysteine 483, cysteine 486, histidine 487, histidine 505, histidine 537, cysteine 543, cysteine 546, histidine 547, histidine 550, cysteine 563, cysteine 566, histidine 567, cysteine 614, cysteine 617, histidine 618, cysteine 686, cysteine 689, histidine 690, and histidine 813.

It in the N-terminal section; belongs to the multicopper oxidase family. Cu cation serves as cofactor. Heme is required as a cofactor.

The protein localises to the encapsulin nanocompartment. It carries out the reaction hydroxylamine + 4 Fe(III)-[cytochrome c] + H2O = 4 Fe(II)-[cytochrome c] + nitrite + 5 H(+). The catalysed reaction is nitric oxide + Fe(III)-[cytochrome c] + H2O = Fe(II)-[cytochrome c] + nitrite + 2 H(+). Functionally, a nitrite reductase-hydroxylamine oxidoreductase protein that probably functions in the type 1 encapsulin nanocompartment. Probably involved in reductive catalysis. Targeted to the encapsulin nanocompartment by association with the diheme domain of the encapsulin shell protein (AC Q1Q6L7). Catalyzes the reduction of nitrite to nitric oxide (NO). Catalyzes the oxidation of hydroxylamine to nitrite. The protein is Probable nitrite reductase-hydroxylamine oxidoreductase fusion protein of Kuenenia stuttgartiensis.